The chain runs to 200 residues: uncharacterized protein (200 aa).

This sequence belongs to the HAD-like hydrolase superfamily. CbbY/CbbZ/Gph/YieH family.

This is an uncharacterized protein from Haemophilus influenzae (strain ATCC 51907 / DSM 11121 / KW20 / Rd).